The primary structure comprises 82 residues: Small ribosomal subunit protein bS16 (82 aa).

Belongs to the bacterial ribosomal protein bS16 family.

This chain is Small ribosomal subunit protein bS16, found in Erwinia tasmaniensis (strain DSM 17950 / CFBP 7177 / CIP 109463 / NCPPB 4357 / Et1/99).